A 123-amino-acid chain; its full sequence is Small ribosomal subunit protein uS12cz/uS12cy (123 aa).

This sequence belongs to the universal ribosomal protein uS12 family. In terms of assembly, part of the 30S ribosomal subunit.

Its subcellular location is the plastid. The protein resides in the chloroplast. With S4 and S5 plays an important role in translational accuracy. Located at the interface of the 30S and 50S subunits. In Gossypium barbadense (Sea Island cotton), this protein is Small ribosomal subunit protein uS12cz/uS12cy (rps12-A).